The following is a 128-amino-acid chain: Ribonuclease P protein component (128 aa).

This sequence belongs to the RnpA family. Consists of a catalytic RNA component (M1 or rnpB) and a protein subunit.

The enzyme catalyses Endonucleolytic cleavage of RNA, removing 5'-extranucleotides from tRNA precursor.. Its function is as follows. RNaseP catalyzes the removal of the 5'-leader sequence from pre-tRNA to produce the mature 5'-terminus. It can also cleave other RNA substrates such as 4.5S RNA. The protein component plays an auxiliary but essential role in vivo by binding to the 5'-leader sequence and broadening the substrate specificity of the ribozyme. The protein is Ribonuclease P protein component of Parasynechococcus marenigrum (strain WH8102).